The primary structure comprises 129 residues: Small ribosomal subunit protein bS6 (129 aa).

Positions 100 to 129 are disordered; it reads SIMLKQKEERAPRREERSEAKPEAKSEAAE. Residues 104–129 are compositionally biased toward basic and acidic residues; that stretch reads KQKEERAPRREERSEAKPEAKSEAAE.

Belongs to the bacterial ribosomal protein bS6 family.

Binds together with bS18 to 16S ribosomal RNA. This Vibrio parahaemolyticus serotype O3:K6 (strain RIMD 2210633) protein is Small ribosomal subunit protein bS6.